A 111-amino-acid chain; its full sequence is Wound-induced proteinase inhibitor 1 (111 aa).

Residues 1 to 23 form the signal peptide; the sequence is MESKFAHIIVFFLLATSFETLMA. Residues 24–36 constitute a propeptide that is removed on maturation; it reads RKEIDGPEVIELL.

This sequence belongs to the protease inhibitor I13 (potato type I serine protease inhibitor) family.

The protein localises to the secreted. The protein is Wound-induced proteinase inhibitor 1 (PIIF) of Solanum lycopersicum (Tomato).